Consider the following 172-residue polypeptide: Ribosome maturation factor RimM (172 aa).

Residues 96–170 (EENEFYFHEI…KITIEVMEGL (75 aa)) form the PRC barrel domain.

This sequence belongs to the RimM family. As to quaternary structure, binds ribosomal protein uS19.

The protein resides in the cytoplasm. Its function is as follows. An accessory protein needed during the final step in the assembly of 30S ribosomal subunit, possibly for assembly of the head region. Essential for efficient processing of 16S rRNA. May be needed both before and after RbfA during the maturation of 16S rRNA. It has affinity for free ribosomal 30S subunits but not for 70S ribosomes. This Listeria monocytogenes serotype 4b (strain CLIP80459) protein is Ribosome maturation factor RimM.